We begin with the raw amino-acid sequence, 198 residues long: Probable GTP-binding protein EngB (198 aa).

The EngB-type G domain occupies S36 to E198. GTP contacts are provided by residues G44–S51, G70–L74, D88–G91, N155–D158, and I182–A184. The Mg(2+) site is built by S51 and T72.

This sequence belongs to the TRAFAC class TrmE-Era-EngA-EngB-Septin-like GTPase superfamily. EngB GTPase family. The cofactor is Mg(2+).

Necessary for normal cell division and for the maintenance of normal septation. This Mesomycoplasma hyopneumoniae (strain J / ATCC 25934 / NCTC 10110) (Mycoplasma hyopneumoniae) protein is Probable GTP-binding protein EngB.